Reading from the N-terminus, the 51-residue chain is Small ribosomal subunit protein uS13 (51 aa).

The protein belongs to the universal ribosomal protein uS13 family. Part of the 30S ribosomal subunit. Forms a loose heterodimer with protein S19. Forms two bridges to the 50S subunit in the 70S ribosome.

In terms of biological role, located at the top of the head of the 30S subunit, it contacts several helices of the 16S rRNA. In the 70S ribosome it contacts the 23S rRNA (bridge B1a) and protein L5 of the 50S subunit (bridge B1b), connecting the 2 subunits; these bridges are implicated in subunit movement. Contacts the tRNAs in the A and P-sites. This Lactococcus lactis subsp. cremoris (Streptococcus cremoris) protein is Small ribosomal subunit protein uS13 (rpsM).